Here is a 949-residue protein sequence, read N- to C-terminus: Sensor histidine kinase RcsC (949 aa).

The Cytoplasmic segment spans residues 1–19 (MKYLASFRTTLKASRYMFR). Residues 20-41 (ALALVLWLLIAFSSVFYIVNAL) form a helical membrane-spanning segment. Residues 42-313 (HQRESEIRQE…PVDKVLERIR (272 aa)) are Periplasmic-facing. A helical transmembrane segment spans residues 314-335 (MLILNAILLNVLAGAALFTLAR). The Cytoplasmic portion of the chain corresponds to 336–949 (MYERRIFIPA…AERVRKSRDS (614 aa)). The 69-residue stretch at 357–425 (QFNRKIVASA…VLTSNNTNLQ (69 aa)) folds into the PAS domain. The 217-residue stretch at 476–692 (TVSHELRTPL…QFTVRIPLYG (217 aa)) folds into the Histidine kinase domain. His479 is modified (phosphohistidine; by autocatalysis). The region spanning 705-805 (SGKRCWLAVR…ARIYLIEMES (101 aa)) is the ABL domain. In terms of domain architecture, Response regulatory spans 826–940 (MILVVDDHPI…VIKQTLTLYA (115 aa)). The residue at position 875 (Asp875) is a 4-aspartylphosphate.

It belongs to the RcsC family. As to quaternary structure, interacts with RcsD. Post-translationally, autophosphorylated. Activation probably requires a transfer of a phosphate group from a His in the transmitter domain to an Asp in the receiver domain.

The protein resides in the cell inner membrane. The catalysed reaction is ATP + protein L-histidine = ADP + protein N-phospho-L-histidine.. With respect to regulation, the Rcs phosphorelay may be activated by RcsF. DjlA, LolA and OmpG might act as a regulator of the phosphorelay. Activity is probably up-regulated by YmgA/AriR, and possibly down-regulated by YcgZ, all 3 are connector proteins providing additional signal input into signaling system. Component of the Rcs signaling system, which controls transcription of numerous genes. RcsC functions as a membrane-associated protein kinase that phosphorylates RcsD in response to environmental signals. The phosphoryl group is then transferred to the response regulator RcsB. RcsC also has phosphatase activity. The system controls expression of genes involved in colanic acid capsule synthesis, biofilm formation and cell division. This Escherichia coli (strain K12) protein is Sensor histidine kinase RcsC.